We begin with the raw amino-acid sequence, 257 residues long: ATP synthase subunit a (257 aa).

The propeptide at 1 to 8 is removed in mature form; sequence MRHLDFVL. The next 7 membrane-spanning stretches (helical) occupy residues 34–54, 93–113, 122–142, 149–169, 187–207, 210–230, and 231–251; these read LTNI…YSLL, FFPL…IGLV, HFIL…ILGF, FFSL…LVLI, ANIL…YNIM, GIIF…FSGL, and ELAI…SYIK.

Belongs to the ATPase A chain family. As to quaternary structure, F-type ATPases have 2 components, CF(1) - the catalytic core - and CF(0) - the membrane proton channel. CF(1) has five subunits: alpha(3), beta(3), gamma(1), delta(1), epsilon(1). CF(0) has three main subunits: a, b and c.

The protein resides in the mitochondrion inner membrane. In terms of biological role, mitochondrial membrane ATP synthase (F(1)F(0) ATP synthase or Complex V) produces ATP from ADP in the presence of a proton gradient across the membrane which is generated by electron transport complexes of the respiratory chain. F-type ATPases consist of two structural domains, F(1) - containing the extramembraneous catalytic core and F(0) - containing the membrane proton channel, linked together by a central stalk and a peripheral stalk. During catalysis, ATP synthesis in the catalytic domain of F(1) is coupled via a rotary mechanism of the central stalk subunits to proton translocation. Key component of the proton channel; it may play a direct role in the translocation of protons across the membrane. This is ATP synthase subunit a (atp6) from Penicillium chrysogenum (Penicillium notatum).